The following is a 950-amino-acid chain: F-box only protein 10 (950 aa).

The F-box domain maps to 1 to 48 (METGGLPLELWRMILAYLHLPDLGRCSLVCRAWYELILSLDSTRWRQL). PbH1 repeat units lie at residues 198 to 217 (SGHI…QVHG) and 238 to 260 (VPLC…TVEG). The disordered stretch occupies residues 313-364 (IEGSQSPTSPVCSSPKPGSKEAEVGSDGERVAQTPDSSDGGLSPSGEDEDDE). Residues 315 to 324 (GSQSPTSPVC) are compositionally biased toward polar residues. Phosphoserine occurs at positions 321 and 326. Residues 330–342 (GSKEAEVGSDGER) are compositionally biased toward basic and acidic residues. Positions 347 to 357 (PDSSDGGLSPS) are enriched in low complexity. 15 PbH1 repeats span residues 423-444 (VQGC…FVCS), 467-489 (NSKI…FLRL), 490-512 (EGGG…DIRK), 513-535 (KSNP…VVLG), 536-558 (NGKG…YILY), 559-581 (HGNP…AVNE), 582-604 (NGKG…DIRR), 605-627 (GGVP…VVGD), 628-650 (EGKG…WMMS), 651-673 (SSLP…AVFS), 713-735 (ITVA…FVQS), 736-758 (SEAL…TIVQ), 760-782 (SQLT…KVEF), 783-805 (QCKV…ITKG), and 828-850 (RSDT…AVRG).

Component of the SCF(FBXO10) complex consisting of CUL1, SKP1 and FBXO10. Interacts with BCL2. Interacts with PRDM1. In terms of tissue distribution, particularly highly expressed in B-cells.

The protein localises to the cytoplasm. It functions in the pathway protein modification; protein ubiquitination. Substrate-recognition component of the SCF (SKP1-CUL1-F-box protein)-type E3 ubiquitin ligase complex. Mediates the ubiquitination and degradation of BCL2, an antiapoptotic protein, thereby playing a role in apoptosis by controlling the stability of BCL2. Targets also the receptor for advanced glycation end products RAGE for ubiquitination and subsequent lysosomal degradation. Directly controls HGAL/GCSAM ubiquitination and degradation and thereby decreases BCR signaling. The sequence is that of F-box only protein 10 (Fbxo10) from Mus musculus (Mouse).